Consider the following 258-residue polypeptide: NAD(P)H-hydrate epimerase (258 aa).

The YjeF N-terminal domain maps to Ala15–Asp244. (6S)-NADPHX is bound at residue Asn75 to Asp79. Asn76 and Asp145 together coordinate K(+). Residues Gly149–Pro155 and Asp181 contribute to the (6S)-NADPHX site. A K(+)-binding site is contributed by Ser184.

This sequence belongs to the NnrE/AIBP family. K(+) is required as a cofactor.

The protein resides in the cytoplasm. It localises to the mitochondrion. The catalysed reaction is (6R)-NADHX = (6S)-NADHX. The enzyme catalyses (6R)-NADPHX = (6S)-NADPHX. Functionally, catalyzes the epimerization of the S- and R-forms of NAD(P)HX, a damaged form of NAD(P)H that is a result of enzymatic or heat-dependent hydration. This is a prerequisite for the S-specific NAD(P)H-hydrate dehydratase to allow the repair of both epimers of NAD(P)HX. The protein is NAD(P)H-hydrate epimerase of Candida albicans (strain SC5314 / ATCC MYA-2876) (Yeast).